We begin with the raw amino-acid sequence, 1415 residues long: DNA-directed RNA polymerase subunit beta' (1415 aa).

Zn(2+)-binding residues include Cys72, Cys74, Cys87, and Cys90. Mg(2+) is bound by residues Asp463, Asp465, and Asp467. Zn(2+)-binding residues include Cys811, Cys885, Cys892, and Cys895.

The protein belongs to the RNA polymerase beta' chain family. In terms of assembly, the RNAP catalytic core consists of 2 alpha, 1 beta, 1 beta' and 1 omega subunit. When a sigma factor is associated with the core the holoenzyme is formed, which can initiate transcription. Mg(2+) serves as cofactor. Zn(2+) is required as a cofactor.

The enzyme catalyses RNA(n) + a ribonucleoside 5'-triphosphate = RNA(n+1) + diphosphate. DNA-dependent RNA polymerase catalyzes the transcription of DNA into RNA using the four ribonucleoside triphosphates as substrates. The chain is DNA-directed RNA polymerase subunit beta' from Cereibacter sphaeroides (strain ATCC 17029 / ATH 2.4.9) (Rhodobacter sphaeroides).